The primary structure comprises 518 residues: Crotonobetaine/carnitine--CoA ligase (518 aa).

This sequence belongs to the ATP-dependent AMP-binding enzyme family.

The catalysed reaction is 4-(trimethylamino)butanoate + ATP + CoA = 4-(trimethylamino)butanoyl-CoA + AMP + diphosphate. The enzyme catalyses crotonobetaine + ATP + CoA = crotonobetainyl-CoA + AMP + diphosphate. It carries out the reaction (R)-carnitine + ATP + CoA = (R)-carnitinyl-CoA + AMP + diphosphate. It functions in the pathway amine and polyamine metabolism; carnitine metabolism. Its function is as follows. Catalyzes the transfer of CoA to carnitine, generating the initial carnitinyl-CoA needed for the CaiB reaction cycle. Also has activity toward crotonobetaine and gamma-butyrobetaine. This is Crotonobetaine/carnitine--CoA ligase from Proteus mirabilis (strain HI4320).